A 389-amino-acid polypeptide reads, in one-letter code: Lipid-A-disaccharide synthase (389 aa).

The protein belongs to the LpxB family.

The catalysed reaction is a lipid X + a UDP-2-N,3-O-bis[(3R)-3-hydroxyacyl]-alpha-D-glucosamine = a lipid A disaccharide + UDP + H(+). Its pathway is bacterial outer membrane biogenesis; LPS lipid A biosynthesis. Functionally, condensation of UDP-2,3-diacylglucosamine and 2,3-diacylglucosamine-1-phosphate to form lipid A disaccharide, a precursor of lipid A, a phosphorylated glycolipid that anchors the lipopolysaccharide to the outer membrane of the cell. The sequence is that of Lipid-A-disaccharide synthase from Burkholderia cenocepacia (strain HI2424).